Consider the following 145-residue polypeptide: Hemoglobin subunit beta (145 aa).

The 145-residue stretch at 1-145 folds into the Globin domain; it reads MLTAEEKAAV…VANALAHRYH (145 aa). At Thr-11 the chain carries Phosphothreonine. Ser-43 bears the Phosphoserine mark. Residue Lys-58 is modified to N6-acetyllysine. His-62 contacts heme b. Lys-81 bears the N6-acetyllysine mark. Position 91 (His-91) interacts with heme b. Position 92 is an S-nitrosocysteine (Cys-92).

This sequence belongs to the globin family. As to quaternary structure, heterotetramer of two alpha chains and two beta chains. As to expression, red blood cells.

Involved in oxygen transport from the lung to the various peripheral tissues. The chain is Hemoglobin subunit beta (HBB) from Bos gaurus frontalis (Domestic gayal).